The chain runs to 334 residues: Anthranilate phosphoribosyltransferase (334 aa).

Residues glycine 79, 82–83, serine 87, 89–92, 107–115, and serine 119 contribute to the 5-phospho-alpha-D-ribose 1-diphosphate site; these read GD, NIST, and KHGNRSISS. Position 79 (glycine 79) interacts with anthranilate. Serine 91 provides a ligand contact to Mg(2+). Asparagine 110 is a binding site for anthranilate. Arginine 165 provides a ligand contact to anthranilate. Positions 224 and 225 each coordinate Mg(2+).

This sequence belongs to the anthranilate phosphoribosyltransferase family. As to quaternary structure, homodimer. Requires Mg(2+) as cofactor.

It catalyses the reaction N-(5-phospho-beta-D-ribosyl)anthranilate + diphosphate = 5-phospho-alpha-D-ribose 1-diphosphate + anthranilate. Its pathway is amino-acid biosynthesis; L-tryptophan biosynthesis; L-tryptophan from chorismate: step 2/5. In terms of biological role, catalyzes the transfer of the phosphoribosyl group of 5-phosphorylribose-1-pyrophosphate (PRPP) to anthranilate to yield N-(5'-phosphoribosyl)-anthranilate (PRA). This is Anthranilate phosphoribosyltransferase from Streptococcus pneumoniae serotype 19F (strain G54).